A 1488-amino-acid chain; its full sequence is MDNISNHAFNYPVLVLNKGLLPEHDDIALARYLFSALALAVSRITQNEEMIVGFHLHPQEITRWKDDECIRQYILPLNIRFNSATPIAGFIREIMTWMTPDAIHQKNAMGASVLTLGPQHALHDIFDLEISWQPPVESEPVQALTCHVASREDALVLTLRFNPARFSATQMQKLPEVWRQITASAAKNGAETLRDIGLIDDAERQRVLHAFNQTEQAWDGETTVAARLKNRAQRHPEQTAVVFRDETLSYRQLYQQAGALAHYLNALETERERCVGLFVEPSLTLMTGVWGILLSGNAYLPLSPEYPEDRLAYMLENSQTRIIVTQPHLRERLLALAPPGIQVVTSDDVDAFMRQHAHSLPDAPQNDIAPHHLAYVIYTSGSTGKPKGVMIEHHSVLNQMNWLAQTVGLNQETVILQKTPMSFDAAQWEILSPACGCRVVMGEPGVYRNPEQLVDMLAEYRVTTLQCVPTLLQALLDTERLTHCPALRQIFSGGEALQKHLAQACLETLPDCELINLYGPTECTINNSAFRVDPVSVRQGPDTLSIGAPVANTRYYILDNCLTPVAVGQIGELYIGGDGVARGYLNRDDLTAERFIVDPFAPAGSGRRLYQTGDIASWNPDGTVQYAGRADNQVKLRGYRVELDEIRSAIETHEWVKAAAVIVRNDPFTGYQNLISFIELNAREAALMDQGNHGSHHQSKADKAQVMLQLANKGCREFPAASQPYTLDLPGKQPDEKQRLTAFSRKTYRFYDGGAVSREDILSLLHEPLLTAISRQPDALTLDELGHWLRYLGQFTSAERLLPKYTYASPGALYATQVFLELNGVAGLTAGHYYYQPVHHQLVRVSEQAAVTPGSLRLHFVGKKSAIEPIYKNNIREVLQMEMGHIIGMLDIILPDYGLGVALCDAAALDPTPLAIDLDDDYLGACDVLSGPRLPTDDDLDIYVQTAGANIADLPVGTYRYVRGDLQHIADDVIDKKHVIAINQAVYERSSFGISVASRTEGWAGYVHVGRKLQRLQMNPLNIGLMSSGYSSETGNDLPAARRFWQILGHRTGPYYFFIGGRISDEQKYSEGMREDAVHMKGPAEMIRDDLAAFMPDYMMPNKVLILDEMPLTANGKIDMKALANINVELKHKTIVAPRNPLEHQVMAIWQAKLKREEMSVDDNFFESGGNSLIAVSLINELNATLNASLPLQVLFQAPTVEKLAAWLSRARREPVSRLVQLQPKGRQAPIYCWPGLGGYCMNLRLLARQLGAERPFFGIQAHGINPDETPYATIGEMAARDIELIRQHQPHGPYTLWGYSFGARVAFETAWQLELAGEVVENLYLLAPGSPKLRDERVAAMNRKADFDNPGYLTILFSVFIGSITDPELERCLETVRDEESFVAFITGLNPALDDGLVRRITRIVAQTFEFTYTFSELQQRQLNAPVTIIKAQGDDYSFIENHGGFSAQPPTVLELMADHYSMLKAPGIDELTSVIQYQQSPPSLVG.

Residues 229 to 585 form an adenylation region; the sequence is KNRAQRHPEQ…GGDGVARGYL (357 aa). In terms of domain architecture, Carrier spans 1137-1212; the sequence is APRNPLEHQV…KLAAWLSRAR (76 aa). S1172 is subject to O-(pantetheine 4'-phosphoryl)serine. The interval 1230–1346 is thioesterase; the sequence is PIYCWPGLGG…ERVAAMNRKA (117 aa).

The protein belongs to the ATP-dependent AMP-binding enzyme family. The cofactor is pantetheine 4'-phosphate.

It carries out the reaction 2 FMN + 2 L-glutamine + 2 ATP + O2 = indigoidine + 2 FMNH2 + 2 AMP + 2 diphosphate + 2 H2O. The enzyme catalyses FMN + L-glutamine + ATP = 3-amino-1,5-dihydropyridine-2,6-dione + FMNH2 + AMP + diphosphate. The catalysed reaction is 2 3-amino-1,5-dihydropyridine-2,6-dione + O2 = indigoidine + 2 H2O. It participates in pigment biosynthesis. In terms of biological role, nonribosomal peptide synthetase involved in the biosynthesis of the blue pigment indigoidine, which is implicated in pathogenicity and protection from oxidative stress. Catalyzes the synthesis of the blue pigment using L-Gln as a substrate. Two glutamine molecules are cyclized and oxidized to form indigoidine. The chain is Indigoidine synthase from Dickeya dadantii (strain 3937) (Erwinia chrysanthemi (strain 3937)).